The primary structure comprises 354 residues: Heat-inducible transcription repressor HrcA (354 aa).

The protein belongs to the HrcA family.

In terms of biological role, negative regulator of class I heat shock genes (grpE-dnaK-dnaJ and groELS operons). Prevents heat-shock induction of these operons. This chain is Heat-inducible transcription repressor HrcA, found in Herpetosiphon aurantiacus (strain ATCC 23779 / DSM 785 / 114-95).